A 371-amino-acid chain; its full sequence is tRNA-specific 2-thiouridylase MnmA (371 aa).

Residues 7–14 and L33 contribute to the ATP site; that span reads AMSGGVDS. C101 acts as the Nucleophile in catalysis. C101 and C213 are oxidised to a cystine. G125 is a binding site for ATP. Residues 163–165 are interaction with tRNA; that stretch reads KDQ. C213 functions as the Cysteine persulfide intermediate in the catalytic mechanism.

The protein belongs to the MnmA/TRMU family.

Its subcellular location is the cytoplasm. It catalyses the reaction S-sulfanyl-L-cysteinyl-[protein] + uridine(34) in tRNA + AH2 + ATP = 2-thiouridine(34) in tRNA + L-cysteinyl-[protein] + A + AMP + diphosphate + H(+). Catalyzes the 2-thiolation of uridine at the wobble position (U34) of tRNA, leading to the formation of s(2)U34. The sequence is that of tRNA-specific 2-thiouridylase MnmA from Roseiflexus castenholzii (strain DSM 13941 / HLO8).